The chain runs to 197 residues: Viral polyamine acetyltransferase (197 aa).

Residue N22 participates in acetyl-CoA binding. Residue E27 is part of the active site. An N-acetyltransferase domain is found at S102–D182. Residues I115, S117, G121, G123, A125, T126, T149, N150, and K159 each contribute to the acetyl-CoA site.

It belongs to the acetyltransferase family.

It catalyses the reaction spermine + acetyl-CoA = N(1)-acetylspermine + CoA + H(+). The enzyme catalyses spermidine + acetyl-CoA = N(1)-acetylspermidine + CoA + H(+). It carries out the reaction spermidine + acetyl-CoA = N(8)-acetylspermidine + CoA + H(+). The catalysed reaction is putrescine + acetyl-CoA = N-acetylputrescine + CoA + H(+). It catalyses the reaction cadaverine + acetyl-CoA = N-acetylcadaverine + CoA + H(+). The enzyme catalyses sym-homospermidine + acetyl-CoA = N(1)-acetyl-sym-homospermidine + CoA + H(+). In terms of biological role, acetylates polyamines such as spermine, spermidine, cadaverine, homospermidine and putrescine (the latter with low efficiency). May play a role in the regulation of polyamine catabolism in the host during viral replication. The chain is Viral polyamine acetyltransferase from Chlorella (PBCV-1).